A 463-amino-acid chain; its full sequence is RuvB-like 2 (463 aa).

ATP is bound at residue 77–84 (GQPGTGKT).

The protein belongs to the RuvB family. As to quaternary structure, forms homohexameric rings. Can form a dodecamer with ruvbl1 made of two stacked hexameric rings. Component of the chromatin-remodeling Ino80 complex. Component of some MLL1/MLL complex.

It localises to the nucleus. The protein localises to the dynein axonemal particle. The enzyme catalyses ATP + H2O = ADP + phosphate + H(+). Has double-stranded DNA-stimulated ATPase activity. Has ATP-dependent DNA helicase (5' to 3') activity suggesting a role in nuclear processes such as recombination and transcription. Represses gene activation mediated by beta-catenin. Proposed core component of the chromatin remodeling Ino80 complex which exhibits DNA- and nucleosome-activated ATPase activity and catalyzes ATP-dependent nucleosome sliding. Involved in the endoplasmic reticulum (ER)-associated degradation (ERAD) pathway where it negatively regulates expression of ER stress response genes. May act as a regulator of embryonic heart growth. The polypeptide is RuvB-like 2 (ruvbl2) (Danio rerio (Zebrafish)).